A 430-amino-acid polypeptide reads, in one-letter code: Dihydrolipoyllysine-residue acetyltransferase component of pyruvate dehydrogenase complex (430 aa).

The Lipoyl-binding domain maps to 2–77; the sequence is AFEFRLPDIG…VVGDVIVKID (76 aa). Lysine 43 is subject to N6-lipoyllysine. The segment at 80–122 is disordered; it reads DAEDMQFKGHDDDSSSKEEPAKEEAPAEQAPVATQTEEVDENR. A compositionally biased stretch (basic and acidic residues) spans 84–104; it reads MQFKGHDDDSSSKEEPAKEEA. The Peripheral subunit-binding (PSBD) domain maps to 125 to 162; it reads KAMPSVRKYAREKGVNIKAVSGSGKNGRITKEDVDAYL. The segment at 164–200 is disordered; it reads GGAPTASNESADSATNEEVAETPAAPAAVSLEGDFPE. Residues 177 to 192 are compositionally biased toward low complexity; it reads ATNEEVAETPAAPAAV. Histidine 401 is a catalytic residue.

Belongs to the 2-oxoacid dehydrogenase family. Forms a 24-polypeptide structural core with octahedral symmetry. (R)-lipoate serves as cofactor.

It carries out the reaction N(6)-[(R)-dihydrolipoyl]-L-lysyl-[protein] + acetyl-CoA = N(6)-[(R)-S(8)-acetyldihydrolipoyl]-L-lysyl-[protein] + CoA. Functionally, the pyruvate dehydrogenase complex catalyzes the overall conversion of pyruvate to acetyl-CoA and CO(2). It contains multiple copies of three enzymatic components: pyruvate dehydrogenase (E1), dihydrolipoamide acetyltransferase (E2) and lipoamide dehydrogenase (E3). In Staphylococcus aureus, this protein is Dihydrolipoyllysine-residue acetyltransferase component of pyruvate dehydrogenase complex (pdhC).